A 154-amino-acid chain; its full sequence is Fibroblast growth factor 2 (154 aa).

The propeptide occupies methionine 1–leucine 9. Asparagine 35 serves as a coordination point for heparin. Position 81 is a phosphotyrosine; by TEC (tyrosine 81). Lysine 94 participates in a covalent cross-link: Glycyl lysine isopeptide (Lys-Gly) (interchain with G-Cter in SUMO1). The segment at lysine 127–lysine 143 is heparin-binding.

This sequence belongs to the heparin-binding growth factors family. As to quaternary structure, monomer. Homodimer. Interacts with FGFR1, FGFR2, FGFR3 and FGFR4. Affinity between fibroblast growth factors (FGFs) and their receptors is increased by heparan sulfate glycosaminoglycans that function as coreceptors. Interacts with CSPG4, FGFBP1 and TEC. Found in a complex with FGFBP1, FGF1 and FGF2. Interacts with FGFBP3. Interacts with integrin ITGAV:ITGB3; the interaction is required for FGF2 signaling. Interacts with SNORC (via the extracellular domain). Interacts with glypican GPC3. Phosphorylation at Tyr-81 regulates FGF2 unconventional secretion.

The protein localises to the secreted. Its subcellular location is the nucleus. In terms of biological role, acts as a ligand for FGFR1, FGFR2, FGFR3 and FGFR4. Also acts as an integrin ligand which is required for FGF2 signaling. Binds to integrin ITGAV:ITGB3. Plays an important role in the regulation of cell survival, cell division, cell differentiation and cell migration. Functions as a potent mitogen in vitro. Can induce angiogenesis. Mediates phosphorylation of ERK1/2 and thereby promotes retinal lens fiber differentiation. This Mus musculus (Mouse) protein is Fibroblast growth factor 2 (Fgf2).